The primary structure comprises 462 residues: Cysteine--tRNA ligase (462 aa).

A Zn(2+)-binding site is contributed by C30. Positions 32–42 (MTVYDYCHIGH) match the 'HIGH' region motif. Zn(2+) is bound by residues C214, H239, and E243. The 'KMSKS' region motif lies at 271 to 275 (KMSKS). Residue K274 coordinates ATP.

This sequence belongs to the class-I aminoacyl-tRNA synthetase family. Monomer. Requires Zn(2+) as cofactor.

The protein resides in the cytoplasm. The enzyme catalyses tRNA(Cys) + L-cysteine + ATP = L-cysteinyl-tRNA(Cys) + AMP + diphosphate. This Herminiimonas arsenicoxydans protein is Cysteine--tRNA ligase.